A 237-amino-acid chain; its full sequence is Endonuclease V (237 aa).

Mg(2+) contacts are provided by Asp46 and Asp114.

The protein belongs to the endonuclease V family. Mg(2+) serves as cofactor.

It localises to the cytoplasm. The enzyme catalyses Endonucleolytic cleavage at apurinic or apyrimidinic sites to products with a 5'-phosphate.. DNA repair enzyme involved in the repair of deaminated bases. Selectively cleaves double-stranded DNA at the second phosphodiester bond 3' to a deoxyinosine leaving behind the intact lesion on the nicked DNA. The polypeptide is Endonuclease V (Xanthomonas oryzae pv. oryzae (strain PXO99A)).